A 222-amino-acid chain; its full sequence is MRTTSFAKVAALCGLLALSGCASKITQPDKYSGFLNNYSDLKETTSATGKPVLRWVDPSFDQSKYDSIVWNPITYYPVPKPSTQVGQKVLDKILNYTNTEMKEAIAQRKPLVTTAGPRSLIFRGAITGVDTSKEGLQFYEVVPVALVVAGTQMATGHRTMDTRLYFEGELIDAATNKPVIKVVRQGEGKDLNNESTPMAFENIKQVIDDMATDATMFDVNKK.

Positions 1–20 (MRTTSFAKVAALCGLLALSG) are cleaved as a signal peptide. The N-palmitoyl cysteine moiety is linked to residue Cys-21. The S-diacylglycerol cysteine moiety is linked to residue Cys-21.

It is found in the cell membrane. This is an uncharacterized protein from Escherichia coli O157:H7.